The following is a 227-amino-acid chain: Probable methylthioribulose-1-phosphate dehydratase (227 aa).

Cys-87 contacts substrate. Zn(2+) is bound by residues His-105 and His-107. Residue Glu-129 is the Proton donor/acceptor of the active site. Residue His-185 coordinates Zn(2+).

This sequence belongs to the aldolase class II family. MtnB subfamily. Zn(2+) is required as a cofactor.

Its subcellular location is the cytoplasm. The catalysed reaction is 5-(methylsulfanyl)-D-ribulose 1-phosphate = 5-methylsulfanyl-2,3-dioxopentyl phosphate + H2O. It participates in amino-acid biosynthesis; L-methionine biosynthesis via salvage pathway; L-methionine from S-methyl-5-thio-alpha-D-ribose 1-phosphate: step 2/6. Catalyzes the dehydration of methylthioribulose-1-phosphate (MTRu-1-P) into 2,3-diketo-5-methylthiopentyl-1-phosphate (DK-MTP-1-P). The protein is Probable methylthioribulose-1-phosphate dehydratase of Drosophila mojavensis (Fruit fly).